We begin with the raw amino-acid sequence, 462 residues long: Ammonium transporter Rh type B (462 aa).

At 1–11 the chain is on the cytoplasmic side; that stretch reads MTDPSTNMRLK. Residues 12–32 traverse the membrane as a helical segment; the sequence is LPITCFILQIILIILFGVLVQ. At 33–62 the chain is on the extracellular side; that stretch reads YDEDTDAKKHHHGNHSESKSDIENDFYYRY. Asparagine 46 carries N-linked (GlcNAc...) asparagine glycosylation. Residues 63–83 traverse the membrane as a helical segment; it reads PSFQDVHVMIFVGFGFLMTFL. At 84–94 the chain is on the cytoplasmic side; the sequence is QRYGFSSVGFN. A helical transmembrane segment spans residues 95–115; that stretch reads FLIAAFSLQWATLMQGFFHGL. Topologically, residues 116 to 125 are extracellular; the sequence is HEGKIHIGVE. A helical membrane pass occupies residues 126-146; it reads SMINADFCTGSVLISFGAVLG. Over 147-152 the chain is Cytoplasmic; it reads KTSPVQ. The helical transmembrane segment at 153–173 threads the bilayer; it reads LLFMAVFEVTLFAVNEFILLT. Topologically, residues 174–180 are extracellular; it reads LLGTKDA. Residues 181 to 201 traverse the membrane as a helical segment; the sequence is GGSMTIHTFGAYFGLMVTRIL. Residues 202–220 lie on the Cytoplasmic side of the membrane; the sequence is YRPNLDKSKHKNCSVYHSD. The chain crosses the membrane as a helical span at residues 221–241; the sequence is LFAMIGTLYLWMFWPSFNSAV. The Extracellular portion of the chain corresponds to 242–302; it reads TEHGDPQHRT…VAAGTAGEMM (61 aa). Residues 303 to 323 traverse the membrane as a helical segment; sequence LTPFGSMIVGFLAGIISVLGF. Residues 324 to 344 lie on the Cytoplasmic side of the membrane; sequence KYLTPILENKLKIQDTCGIHN. Residues 345 to 365 form a helical membrane-spanning segment; it reads LHGMPGVLGAIVGAVTASLAS. Topologically, residues 366 to 395 are extracellular; the sequence is KEVYGEGLEKVFPDVASGKRTASDQGGVQA. A helical membrane pass occupies residues 396-416; sequence ISLAVTLGMALFGGLIVGFIL. Residues 417–462 are Cytoplasmic-facing; that stretch reads KLPIFGAPRDTTCFEDSLYWEVPGEEESHEDQLTTVKTEESDKLNS. The interval 441 to 462 is disordered; sequence EEESHEDQLTTVKTEESDKLNS. Residues 453–462 are compositionally biased toward basic and acidic residues; that stretch reads KTEESDKLNS.

This sequence belongs to the ammonium transporter (TC 2.A.49) family. Rh subfamily.

The protein localises to the basolateral cell membrane. Its subcellular location is the cytoplasmic vesicle membrane. In terms of biological role, functions as an ammonia transporter. May play a role in the elimination of ammonia in the gill. The protein is Ammonium transporter Rh type B (rhbg) of Oryzias latipes (Japanese rice fish).